The chain runs to 384 residues: ATP synthase subunit a (384 aa).

The segment at 22–60 is disordered; sequence PAPAAAPVEQHGAPAPEAAAPDAHAAPAGEHGAAVEAHA. A run of 6 helical transmembrane segments spans residues 131 to 151, 189 to 209, 218 to 238, 258 to 278, 293 to 313, and 319 to 339; these read KHVMMMWFASALLLVVVLAAV, FVPYLVTAFFFILFLNLFGLI, NLSVTVALALFTFLITQYAAI, LAPLWIIMIPVEFLGLFTKPF, FVILALLGLIFALGTPWVAFG, and LGIFLLELFVAFVQAYIFTML. Residues 355 to 384 are disordered; sequence HGHAEEHGHAGPGMGSEHGSHVAGASPGHG.

It belongs to the ATPase A chain family. In terms of assembly, F-type ATPases have 2 components, CF(1) - the catalytic core - and CF(0) - the membrane proton channel. CF(1) has five subunits: alpha(3), beta(3), gamma(1), delta(1), epsilon(1). CF(0) has three main subunits: a(1), b(2) and c(9-12). The alpha and beta chains form an alternating ring which encloses part of the gamma chain. CF(1) is attached to CF(0) by a central stalk formed by the gamma and epsilon chains, while a peripheral stalk is formed by the delta and b chains.

Its subcellular location is the cell inner membrane. In terms of biological role, key component of the proton channel; it plays a direct role in the translocation of protons across the membrane. This chain is ATP synthase subunit a, found in Anaeromyxobacter dehalogenans (strain 2CP-1 / ATCC BAA-258).